The chain runs to 231 residues: NADH-ubiquinone oxidoreductase chain 4 (231 aa).

A run of 6 helical transmembrane segments spans residues 1–21 (PIAG…YGII), 34–54 (MFLP…LTCL), 63–85 (IAYS…TPWG), 89–111 (AMAL…NTTY), 128–148 (ILPM…AIPP), and 169–189 (TIIL…HMLL).

It belongs to the complex I subunit 4 family.

The protein localises to the mitochondrion membrane. The catalysed reaction is a ubiquinone + NADH + 5 H(+)(in) = a ubiquinol + NAD(+) + 4 H(+)(out). Its function is as follows. Core subunit of the mitochondrial membrane respiratory chain NADH dehydrogenase (Complex I) that is believed to belong to the minimal assembly required for catalysis. Complex I functions in the transfer of electrons from NADH to the respiratory chain. The immediate electron acceptor for the enzyme is believed to be ubiquinone. The polypeptide is NADH-ubiquinone oxidoreductase chain 4 (MT-ND4) (Bothrops bilineatus (Green jararaca)).